A 79-amino-acid polypeptide reads, in one-letter code: Large ribosomal subunit protein uL24 (79 aa).

It belongs to the universal ribosomal protein uL24 family. Part of the 50S ribosomal subunit.

Functionally, one of two assembly initiator proteins, it binds directly to the 5'-end of the 23S rRNA, where it nucleates assembly of the 50S subunit. In terms of biological role, one of the proteins that surrounds the polypeptide exit tunnel on the outside of the subunit. This chain is Large ribosomal subunit protein uL24, found in Aliarcobacter butzleri (strain RM4018) (Arcobacter butzleri).